Consider the following 331-residue polypeptide: Small ribosomal subunit protein uS2 (331 aa).

Belongs to the universal ribosomal protein uS2 family.

This is Small ribosomal subunit protein uS2 from Rhodopseudomonas palustris (strain HaA2).